The chain runs to 492 residues: MEPKQTADARDSPPLLVFLEPAAEEVTAHTAPLSPNPQSARAAPGSAVRFFSDSAREEEAGEDEPLLKKSGPVSPRAARKGRTRLSSSSDRENMSGGHVGNGEFNVILDDLEFADIIHRAEQAIESGVFPERISQGSSGSYFVKDPKGKIIGVFKPKSEEPYGHLNPKWTKYFHKICCPCCFGRGCLVPNQGYLSEAGAYLVDEKLGLGVVPKTKVVWLVSETFNYSAIDRAKSRGKKYALEKVPKVGRKFHRIGLPPKVGSFQLFVDGYKEADYWLRKFETDPLPENTRKQLQCQFEKLVILDYVIRNTDRGNDNWLIRYDSQDDDELMEKGDDFPLKDWKEIKEPVIKIAAIDNGLAFPFKHPDEWRAYPFHWAWLPQAKVPFSQETRDLILPRISDMNFVQDLCEDLYELFKTDKGFDKATFEKQMSVMRGQILNLTQALKDGKTPIQLVQMPRVVVERSCSGSQGRIVQMSNAFTQTFHCRKPFFSSW.

Over residues 1 to 11 (MEPKQTADARD) the composition is skewed to basic and acidic residues. Positions 1–98 (MEPKQTADAR…SDRENMSGGH (98 aa)) are disordered. The PI3K/PI4K catalytic domain occupies 127–462 (GVFPERISQG…VQMPRVVVER (336 aa)). The interval 133–139 (ISQGSSG) is G-loop. The ATP site is built by Ser-140 and Lys-155. The interval 160-162 (EPY) is important for substrate binding. Positions 168 to 181 (KWTKYFHKICCPCC) are important for interaction with membranes. ATP-binding positions include 264 to 267 (QLFV) and 278 to 279 (RK). Residues 271 to 279 (KEADYWLRK) are important for interaction with membranes. A catalytic loop region spans residues 308–316 (RNTDRGNDN). Residues 353-373 (AIDNGLAFPFKHPDEWRAYPF) are activation loop. Asp-355 is an ATP binding site. Positions 368 to 377 (WRAYPFHWAW) are important for interaction with membranes.

Belongs to the PI3/PI4-kinase family. Type II PI4K subfamily.

The protein resides in the cytoplasm. It is found in the cytosol. It localises to the golgi apparatus membrane. Its subcellular location is the endoplasmic reticulum membrane. The protein localises to the cell membrane. The protein resides in the early endosome membrane. It carries out the reaction a 1,2-diacyl-sn-glycero-3-phospho-(1D-myo-inositol) + ATP = a 1,2-diacyl-sn-glycero-3-phospho-(1D-myo-inositol 4-phosphate) + ADP + H(+). Its function is as follows. Contributes to the overall PI4-kinase activity of the cell. This contribution may be especially significant in plasma membrane, endosomal and Golgi compartments. The phosphorylation of phosphatidylinositol (PI) to PI4P is the first committed step in the generation of phosphatidylinositol 4,5-bisphosphate (PIP2), a precursor of the second messenger inositol 1,4,5-trisphosphate (InsP3). The chain is Phosphatidylinositol 4-kinase type 2-beta (pi4k2b) from Xenopus tropicalis (Western clawed frog).